The following is a 757-amino-acid chain: Xaa-Pro dipeptidyl-peptidase (757 aa).

Catalysis depends on charge relay system residues serine 348, aspartate 468, and histidine 498.

Belongs to the peptidase S15 family. Homodimer.

The protein localises to the cytoplasm. It catalyses the reaction Hydrolyzes Xaa-Pro-|- bonds to release unblocked, N-terminal dipeptides from substrates including Ala-Pro-|-p-nitroanilide and (sequentially) Tyr-Pro-|-Phe-Pro-|-Gly-Pro-|-Ile.. Functionally, removes N-terminal dipeptides sequentially from polypeptides having unsubstituted N-termini provided that the penultimate residue is proline. The protein is Xaa-Pro dipeptidyl-peptidase of Streptococcus pneumoniae (strain ATCC BAA-255 / R6).